Here is a 526-residue protein sequence, read N- to C-terminus: GMP synthase [glutamine-hydrolyzing] (526 aa).

The Glutamine amidotransferase type-1 domain occupies 4 to 204 (KIVVLDFGSQ…AHAICGCSGD (201 aa)). Cys-87 functions as the Nucleophile in the catalytic mechanism. Catalysis depends on residues His-178 and Glu-180. Residues 205 to 401 (WTPASFVEEQ…LDVPDPIVGR (197 aa)) enclose the GMPS ATP-PPase domain. An ATP-binding site is contributed by 232-238 (SGGVDSS).

Homodimer.

The enzyme catalyses XMP + L-glutamine + ATP + H2O = GMP + L-glutamate + AMP + diphosphate + 2 H(+). Its pathway is purine metabolism; GMP biosynthesis; GMP from XMP (L-Gln route): step 1/1. Its function is as follows. Catalyzes the synthesis of GMP from XMP. The chain is GMP synthase [glutamine-hydrolyzing] from Salinibacter ruber (strain DSM 13855 / M31).